The sequence spans 103 residues: Large ribosomal subunit protein bL21 (103 aa).

The protein belongs to the bacterial ribosomal protein bL21 family. In terms of assembly, part of the 50S ribosomal subunit. Contacts protein L20.

This protein binds to 23S rRNA in the presence of protein L20. The polypeptide is Large ribosomal subunit protein bL21 (Cupriavidus necator (strain ATCC 17699 / DSM 428 / KCTC 22496 / NCIMB 10442 / H16 / Stanier 337) (Ralstonia eutropha)).